A 399-amino-acid chain; its full sequence is 1-deoxy-D-xylulose 5-phosphate reductoisomerase (399 aa).

NADPH contacts are provided by Thr16, Gly17, Ser18, Ile19, Gly42, Arg43, Asn44, and Asn127. Residue Lys128 coordinates 1-deoxy-D-xylulose 5-phosphate. NADPH is bound at residue Glu129. Asp153 serves as a coordination point for Mn(2+). Ser154, Glu155, Ser179, and His202 together coordinate 1-deoxy-D-xylulose 5-phosphate. Residue Glu155 participates in Mn(2+) binding. Gly208 is a binding site for NADPH. Positions 215, 220, 221, and 224 each coordinate 1-deoxy-D-xylulose 5-phosphate. Residue Glu224 coordinates Mn(2+).

Belongs to the DXR family. The cofactor is Mg(2+). Requires Mn(2+) as cofactor.

The enzyme catalyses 2-C-methyl-D-erythritol 4-phosphate + NADP(+) = 1-deoxy-D-xylulose 5-phosphate + NADPH + H(+). It participates in isoprenoid biosynthesis; isopentenyl diphosphate biosynthesis via DXP pathway; isopentenyl diphosphate from 1-deoxy-D-xylulose 5-phosphate: step 1/6. Functionally, catalyzes the NADPH-dependent rearrangement and reduction of 1-deoxy-D-xylulose-5-phosphate (DXP) to 2-C-methyl-D-erythritol 4-phosphate (MEP). The sequence is that of 1-deoxy-D-xylulose 5-phosphate reductoisomerase from Caulobacter vibrioides (strain NA1000 / CB15N) (Caulobacter crescentus).